Reading from the N-terminus, the 324-residue chain is FCS-Like Zinc finger 11 (324 aa).

The FLZ-type zinc-finger motif lies at 266–309 (NFLGICNFCNKKLGGGDDIYMYREKSFCSEECRSEEMMIDEEDL).

This sequence belongs to the FLZ family. As to quaternary structure, interacts with KIN10 and KIN11 via its FLZ-type zinc finger domain. Forms heterodimer with FLZ2 in vitro.

The protein localises to the cytoplasm. It localises to the nucleus. Its function is as follows. May act as an adapter to facilitate the interaction of SnRK1 complex with effector proteins, conferring tissue- and stimulus-type specific differences in the SnRK1 regulation pathway. This is FCS-Like Zinc finger 11 from Arabidopsis thaliana (Mouse-ear cress).